We begin with the raw amino-acid sequence, 546 residues long: Glucose-6-phosphate isomerase (546 aa).

Glu-356 serves as the catalytic Proton donor. Residues His-387 and Lys-507 contribute to the active site.

This sequence belongs to the GPI family.

Its subcellular location is the cytoplasm. It catalyses the reaction alpha-D-glucose 6-phosphate = beta-D-fructose 6-phosphate. Its pathway is carbohydrate biosynthesis; gluconeogenesis. It functions in the pathway carbohydrate degradation; glycolysis; D-glyceraldehyde 3-phosphate and glycerone phosphate from D-glucose: step 2/4. Functionally, catalyzes the reversible isomerization of glucose-6-phosphate to fructose-6-phosphate. The sequence is that of Glucose-6-phosphate isomerase from Syntrophus aciditrophicus (strain SB).